The primary structure comprises 295 residues: Acetylglutamate kinase (295 aa).

Residues 64 to 65 (GG), R86, and N179 each bind substrate.

It belongs to the acetylglutamate kinase family. ArgB subfamily.

It localises to the cytoplasm. It catalyses the reaction N-acetyl-L-glutamate + ATP = N-acetyl-L-glutamyl 5-phosphate + ADP. It participates in amino-acid biosynthesis; L-arginine biosynthesis; N(2)-acetyl-L-ornithine from L-glutamate: step 2/4. Catalyzes the ATP-dependent phosphorylation of N-acetyl-L-glutamate. This is Acetylglutamate kinase from Thermosynechococcus vestitus (strain NIES-2133 / IAM M-273 / BP-1).